The primary structure comprises 158 residues: Ribonuclease H (158 aa).

The RNase H type-1 domain occupies 1–142; that stretch reads MRKQVEIFTD…CDELARAAAM (142 aa). Positions 10, 48, 70, and 134 each coordinate Mg(2+).

This sequence belongs to the RNase H family. In terms of assembly, monomer. Mg(2+) is required as a cofactor.

The protein resides in the cytoplasm. It carries out the reaction Endonucleolytic cleavage to 5'-phosphomonoester.. Endonuclease that specifically degrades the RNA of RNA-DNA hybrids. This is Ribonuclease H from Cronobacter sakazakii (strain ATCC BAA-894) (Enterobacter sakazakii).